Here is a 186-residue protein sequence, read N- to C-terminus: MKIFFITSNPGKVREVANFLGTFGIEIVQLKHEYPEIQAEKLEDVVDFGISWLKGKVPEPFMIEDSGLFIESLKGFPGVYSSYVYRTIGLEGILKLMEGAEDRRAYFKSVIGFYIDGKAYKFSGVTWGRISNEKRGTHGFGYDPIFIPEGSEKTFAEMTIEEKNALSHRGKALKAFFEWLKVNLKY.

Substrate is bound at residue 7–12; sequence TSNPGK. Positions 36 and 65 each coordinate Mg(2+). D65 functions as the Proton acceptor in the catalytic mechanism. Substrate-binding positions include S66, 140–143, K163, and 168–169; these read FGYD and HR.

Belongs to the HAM1 NTPase family. As to quaternary structure, homodimer. Requires Mg(2+) as cofactor. It depends on Mn(2+) as a cofactor.

It carries out the reaction XTP + H2O = XMP + diphosphate + H(+). The catalysed reaction is dITP + H2O = dIMP + diphosphate + H(+). It catalyses the reaction ITP + H2O = IMP + diphosphate + H(+). Pyrophosphatase that catalyzes the hydrolysis of nucleoside triphosphates to their monophosphate derivatives, with a high preference for the non-canonical purine nucleotides XTP (xanthosine triphosphate), dITP (deoxyinosine triphosphate) and ITP. Seems to function as a house-cleaning enzyme that removes non-canonical purine nucleotides from the nucleotide pool, thus preventing their incorporation into DNA/RNA and avoiding chromosomal lesions. This is dITP/XTP pyrophosphatase from Pyrococcus horikoshii (strain ATCC 700860 / DSM 12428 / JCM 9974 / NBRC 100139 / OT-3).